A 199-amino-acid chain; its full sequence is Peroxiredoxin-1 (199 aa).

At Ser-2 the chain carries N-acetylserine. A Thioredoxin domain is found at Ala-6 to Phe-165. Residue Lys-7 is modified to N6-acetyllysine; alternate. Lys-7 is covalently cross-linked (Glycyl lysine isopeptide (Lys-Gly) (interchain with G-Cter in SUMO2); alternate). Residues Lys-16 and Lys-27 each carry the N6-acetyllysine modification. The residue at position 32 (Ser-32) is a Phosphoserine. Position 35 is an N6-acetyllysine; alternate (Lys-35). An N6-succinyllysine; alternate modification is found at Lys-35. Catalysis depends on Cys-52, which acts as the Cysteine sulfenic acid (-SOH) intermediate. Residue Thr-90 is modified to Phosphothreonine; by CDK1. Lys-120 is covalently cross-linked (Glycyl lysine isopeptide (Lys-Gly) (interchain with G-Cter in SUMO2)). Position 136 is an N6-acetyllysine (Lys-136). Residues Gly-176–Lys-199 form a disordered region. A compositionally biased stretch (basic and acidic residues) spans Ile-184–Lys-199. Lys-185 participates in a covalent cross-link: Glycyl lysine isopeptide (Lys-Gly) (interchain with G-Cter in SUMO1). Lys-197 carries the N6-acetyllysine modification.

The protein belongs to the peroxiredoxin family. AhpC/Prx1 subfamily. In terms of assembly, homodimer; disulfide-linked, upon oxidation. 5 homodimers assemble to form a ring-like decamer. Interacts with GDPD5; forms a mixed-disulfide with GDPD5. Interacts with SESN1 and SESN2. Interacts with FAM107A. Phosphorylated on Thr-90 during the M-phase, which leads to a more than 80% decrease in enzymatic activity. In terms of processing, acetylation increases reducing activity and resistance to superoxidation. Deacetylated by HDAC6 which decreases reducing activity. Post-translationally, the enzyme can be inactivated by further oxidation of the cysteine sulfenic acid (C(P)-SOH) to sulphinic acid (C(P)-SO2H) instead of its condensation to a disulfide bond. It can be reactivated by forming a transient disulfide bond with sulfiredoxin SRXN1, which reduces the cysteine sulfinic acid in an ATP- and Mg-dependent manner.

It is found in the cytoplasm. Its subcellular location is the melanosome. It carries out the reaction a hydroperoxide + [thioredoxin]-dithiol = an alcohol + [thioredoxin]-disulfide + H2O. Thiol-specific peroxidase that catalyzes the reduction of hydrogen peroxide and organic hydroperoxides to water and alcohols, respectively. Plays a role in cell protection against oxidative stress by detoxifying peroxides and as sensor of hydrogen peroxide-mediated signaling events. Might participate in the signaling cascades of growth factors and tumor necrosis factor-alpha by regulating the intracellular concentrations of H(2)O(2). Reduces an intramolecular disulfide bond in GDPD5 that gates the ability to GDPD5 to drive postmitotic motor neuron differentiation. The polypeptide is Peroxiredoxin-1 (PRDX1) (Homo sapiens (Human)).